A 504-amino-acid polypeptide reads, in one-letter code: Maturase K (504 aa).

Belongs to the intron maturase 2 family. MatK subfamily.

It is found in the plastid. It localises to the chloroplast. Its function is as follows. Usually encoded in the trnK tRNA gene intron. Probably assists in splicing its own and other chloroplast group II introns. The protein is Maturase K of Vauquelinia californica (Arizona rosewood).